The sequence spans 115 residues: Peptidyl-tRNA hydrolase (115 aa).

The protein belongs to the PTH2 family.

The protein localises to the cytoplasm. The catalysed reaction is an N-acyl-L-alpha-aminoacyl-tRNA + H2O = an N-acyl-L-amino acid + a tRNA + H(+). Functionally, the natural substrate for this enzyme may be peptidyl-tRNAs which drop off the ribosome during protein synthesis. This Methanosarcina acetivorans (strain ATCC 35395 / DSM 2834 / JCM 12185 / C2A) protein is Peptidyl-tRNA hydrolase.